The sequence spans 228 residues: Ribose-5-phosphate isomerase A (228 aa).

Substrate contacts are provided by residues 26 to 29 (SGST), 81 to 84 (DGAD), and 94 to 97 (KGGG). Glu103 serves as the catalytic Proton acceptor. Lys121 is a substrate binding site.

It belongs to the ribose 5-phosphate isomerase family. Homodimer.

The enzyme catalyses aldehydo-D-ribose 5-phosphate = D-ribulose 5-phosphate. It participates in carbohydrate degradation; pentose phosphate pathway; D-ribose 5-phosphate from D-ribulose 5-phosphate (non-oxidative stage): step 1/1. Its function is as follows. Catalyzes the reversible conversion of ribose-5-phosphate to ribulose 5-phosphate. This is Ribose-5-phosphate isomerase A from Shouchella clausii (strain KSM-K16) (Alkalihalobacillus clausii).